The primary structure comprises 258 residues: Acetylglutamate kinase (258 aa).

Residues 44–45 (GG), arginine 66, and asparagine 158 contribute to the substrate site. ATP contacts are provided by residues 181 to 186 (DVSGIL) and 209 to 211 (IIT).

This sequence belongs to the acetylglutamate kinase family. ArgB subfamily. Homodimer.

The protein localises to the cytoplasm. The catalysed reaction is N-acetyl-L-glutamate + ATP = N-acetyl-L-glutamyl 5-phosphate + ADP. It participates in amino-acid biosynthesis; L-arginine biosynthesis; N(2)-acetyl-L-ornithine from L-glutamate: step 2/4. Functionally, catalyzes the ATP-dependent phosphorylation of N-acetyl-L-glutamate. The chain is Acetylglutamate kinase from Escherichia coli O6:K15:H31 (strain 536 / UPEC).